A 121-amino-acid polypeptide reads, in one-letter code: Small ribosomal subunit protein uS10 (121 aa).

At Ser2 the chain carries N-acetylserine. Residues Lys6, Lys8, Lys21, Lys32, and Lys101 each participate in a glycyl lysine isopeptide (Lys-Gly) (interchain with G-Cter in ubiquitin) cross-link.

This sequence belongs to the universal ribosomal protein uS10 family. In terms of assembly, component of the small ribosomal subunit (SSU). Mature yeast ribosomes consist of a small (40S) and a large (60S) subunit. The 40S small subunit contains 1 molecule of ribosomal RNA (18S rRNA) and 33 different proteins (encoded by 57 genes). The large 60S subunit contains 3 rRNA molecules (25S, 5.8S and 5S rRNA) and 46 different proteins (encoded by 81 genes). In terms of processing, ubiquitinated at Lys-6 and Lys-8 by HEL2, to activate the ribosome quality control (RQC) pathway in response to stalled ribosomes. Post-translationally, N-terminally acetylated by acetyltransferase NatA. Also partially acetylated by NatC.

Its subcellular location is the cytoplasm. Functionally, component of the ribosome, a large ribonucleoprotein complex responsible for the synthesis of proteins in the cell. The small ribosomal subunit (SSU) binds messenger RNAs (mRNAs) and translates the encoded message by selecting cognate aminoacyl-transfer RNA (tRNA) molecules. The large subunit (LSU) contains the ribosomal catalytic site termed the peptidyl transferase center (PTC), which catalyzes the formation of peptide bonds, thereby polymerizing the amino acids delivered by tRNAs into a polypeptide chain. The nascent polypeptides leave the ribosome through a tunnel in the LSU and interact with protein factors that function in enzymatic processing, targeting, and the membrane insertion of nascent chains at the exit of the ribosomal tunnel. In Saccharomyces cerevisiae (strain ATCC 204508 / S288c) (Baker's yeast), this protein is Small ribosomal subunit protein uS10.